The primary structure comprises 910 residues: p53-induced death domain-containing protein 1 (910 aa).

The interval 1 to 25 (MAATVEGPELEAAAAAGDASEDSDA) is disordered. Alanine 2 bears the N-acetylalanine mark. LRR repeat units follow at residues 126 to 147 (HLAH…VLQM), 149 to 171 (GLGA…GALP), 172 to 194 (ALTF…GALS), 195 to 216 (TLQR…IGGL), 218 to 240 (SLLE…AGLR), 241 to 263 (SLRL…ARLP), and 264 to 285 (LLTR…LLDA). 2 positions are modified to phosphoserine: serine 299 and serine 305. 2 consecutive ZU5 domains span residues 322–454 (DLDS…VSRP) and 455–596 (VSNA…WYTT). Peptidase S68 stretches follow at residues 423 to 452 (DLET…LVVS) and 566 to 594 (DITA…WLWY). Active-site residues include histidine 444, serine 446, histidine 586, and serine 588. The segment at 580-716 (ARFQVTHFSW…TTTLDREAQA (137 aa)) is UPA domain. The 86-residue stretch at 788-873 (TQSNLLSVAG…DVAEEVRAVL (86 aa)) folds into the Death domain. The interval 884–910 (IRRMGLAPKDPALPGSSAPQPPEPAQA) is disordered.

Forms a complex named the PIDDosome with CASP2 and CRADD. Forms a complex with IKBKG and RIPK1. Interacts with FADD and MADD. Post-translationally, undergoes autoproteolytic processing whose extent either directs cells towards survival or apoptotic pathways. Autoproteolytically cleaved into two main fragments PIDD-N and PIDD-C. PIDD-C can be further processed into PIDD-CC, a processing which is enhanced by DNA damage. The cleavage producing PIDD-C is required for translocation of PIDD1 to the nucleus upon DNA damage and activation of NF-kappa-B. PIDD-CC mediates the interaction with CRADD and the cleavage producing PIDD-CC is required for the activation of CASP2. PIDD-N remains associated with PIDD-C and PIDD-CC after cleavage. Ubiquitous.

Its subcellular location is the cytoplasm. The protein localises to the nucleus. Functionally, component of the DNA damage/stress response pathway that functions downstream of p53/TP53 and can either promote cell survival or apoptosis. Associated with CRADD and the CASP2 caspase, it forms the PIDDosome a complex that activates CASP2 and triggers apoptosis. Associated with IKBKG and RIPK1, it enhances sumoylation and ubiquitination of IKBKG which is important for activation of the transcription factor NF-kappa-B. The polypeptide is p53-induced death domain-containing protein 1 (Homo sapiens (Human)).